The following is a 442-amino-acid chain: MENAKMNSLIAQYPLVKDLVALKETTWFNPGTTSLAEGLPYVGLTEQDVQDAHARLSRFAPYLAKAFAETAATGGIIESELVAIPAMQKRLEKEYQQPISGQLLLKKDSHLPISGSIKARGGIYEVLAHAEKLALEAGLLTLDDDYSKLLSPEFKQFFSQYSIAVGSTGNLGLSIGIMSARIGFKVTVHMSADARAWKKAKLRSHGVTVVEYEQDYGVAVEEGRKAAQSDPNCFFIDDENSRTLFLGYSVAGQRLKAQFAQQGRIVDADNPLFVYLPCGVGGGPGGVAFGLKLAFGDHVHCFFAEPTHSPCMLLGVHTGLHDQISVQDIGIDNLTAADGLAVGRASGFVGRAMERLLDGFYTLSDQTMYDMLGWLAQEEGIRLEPSALAGMAGPQRVCASVSYQQMHGFSAEQLRNTTHLVWATGGGMVPEEEMNQYLAKGR.

K118 carries the post-translational modification N6-(pyridoxal phosphate)lysine.

Belongs to the serine/threonine dehydratase family. DsdA subfamily. Monomer. Pyridoxal 5'-phosphate serves as cofactor.

It carries out the reaction D-serine = pyruvate + NH4(+). The sequence is that of D-serine dehydratase from Shigella sonnei (strain Ss046).